A 699-amino-acid polypeptide reads, in one-letter code: SPS-sensor serine protease component SSY5 (699 aa).

Disordered regions lie at residues 1 to 113 (MVRF…LQGF) and 128 to 158 (PVKE…ENAR). The propeptide occupies 1-381 (MVRFFGLNKK…YCVKDYIKKA (381 aa)). Residues 24 to 38 (NEQNAAETSSSNVSG) show a composition bias toward polar residues. Residues 39–51 (NEERIDPNSHDTN) show a composition bias toward basic and acidic residues. Residues 61-78 (STTFGSSIQSSSIFSRGR) are compositionally biased toward low complexity. A compositionally biased stretch (polar residues) spans 83-93 (TGASSSMATSE). Low complexity-rich tracts occupy residues 97–109 (HSSG…NSKN) and 144–154 (SSSTSSTLATS). The interval 459–699 (FAITCAHVVL…QWDIDPQLDG (241 aa)) is serine protease. Residues H465, D545, and S640 each act as charge relay system in the active site.

It belongs to the peptidase S64 family. Component of the plasma membrane SPS (SSY1-PTR3-SSY5) amino acid sensor complex. Post-translationally, the propeptide is autoproteolytically cleaved from the catalytic domain but remains associated, forming an inactive protease complex. This processing occurs even in the absence of signaling.

It is found in the cell membrane. Protease component of the SPS-sensor system, which regulates the expression of several amino acid-metabolizing enzymes and amino acid- and peptide-permeases in response to extracellular amino acid levels by controlling the activity of two transcription factors, STP1 and STP2. Catalyzes the activation of these transcription factors, which are synthesized as latent cytoplasmic precursors, by proteolytic removal of an N-terminal inhibitory domain containing cytoplasmic retention motifs. SSY5 binds as an inactive protease complex to STP1. In response to extracellular amino acids and dependent on the other SPS-sensor components, the inhibitory propeptide is induced to dissociate, and thereby enables the catalytic domain to process STP1. This Saccharomyces cerevisiae (strain ATCC 204508 / S288c) (Baker's yeast) protein is SPS-sensor serine protease component SSY5 (SSY5).